We begin with the raw amino-acid sequence, 250 residues long: NAD-dependent protein deacetylase (250 aa).

One can recognise a Deacetylase sirtuin-type domain in the interval 1-244 (MECDKVGDLL…PCVVDYIKSQ (244 aa)). NAD(+)-binding residues include Ala-22, Thr-26, Phe-33, Arg-34, Gln-98, Ile-100, Asp-101, and His-116. Phe-33 is a binding site for nicotinamide. Ile-100 and Asp-101 together coordinate nicotinamide. His-116 serves as the catalytic Proton acceptor. The Zn(2+) site is built by Cys-124, Cys-127, Cys-149, and Cys-151. The NAD(+) site is built by Ser-187, Ser-188, Asn-212, and Val-230.

Belongs to the sirtuin family. Class U subfamily. Requires Zn(2+) as cofactor.

It is found in the cytoplasm. It carries out the reaction N(6)-acetyl-L-lysyl-[protein] + NAD(+) + H2O = 2''-O-acetyl-ADP-D-ribose + nicotinamide + L-lysyl-[protein]. Its function is as follows. NAD-dependent protein deacetylase which modulates the activities of several enzymes which are inactive in their acetylated form. Deacetylates the N-terminal lysine residue of Alba, the major archaeal chromatin protein and that, in turn, increases Alba's DNA binding affinity, thereby repressing transcription. The protein is NAD-dependent protein deacetylase of Sulfurisphaera tokodaii (strain DSM 16993 / JCM 10545 / NBRC 100140 / 7) (Sulfolobus tokodaii).